Consider the following 358-residue polypeptide: Aminomethyltransferase (358 aa).

The protein belongs to the GcvT family. In terms of assembly, the glycine cleavage system is composed of four proteins: P, T, L and H.

It carries out the reaction N(6)-[(R)-S(8)-aminomethyldihydrolipoyl]-L-lysyl-[protein] + (6S)-5,6,7,8-tetrahydrofolate = N(6)-[(R)-dihydrolipoyl]-L-lysyl-[protein] + (6R)-5,10-methylene-5,6,7,8-tetrahydrofolate + NH4(+). In terms of biological role, the glycine cleavage system catalyzes the degradation of glycine. The polypeptide is Aminomethyltransferase (Francisella tularensis subsp. tularensis (strain FSC 198)).